A 360-amino-acid polypeptide reads, in one-letter code: Peptide chain release factor 1 (360 aa).

Gln235 carries the post-translational modification N5-methylglutamine. The disordered stretch occupies residues 286–313 (RQQAEASTRRNLLGSGDRSDRNRTYNFP).

Belongs to the prokaryotic/mitochondrial release factor family. Methylated by PrmC. Methylation increases the termination efficiency of RF1.

Its subcellular location is the cytoplasm. Functionally, peptide chain release factor 1 directs the termination of translation in response to the peptide chain termination codons UAG and UAA. The sequence is that of Peptide chain release factor 1 from Cronobacter sakazakii (strain ATCC BAA-894) (Enterobacter sakazakii).